A 240-amino-acid polypeptide reads, in one-letter code: tRNA (guanine-N(1)-)-methyltransferase (240 aa).

Residues G110 and 129–134 (LGDFVL) each bind S-adenosyl-L-methionine.

This sequence belongs to the RNA methyltransferase TrmD family. In terms of assembly, homodimer.

The protein resides in the cytoplasm. The catalysed reaction is guanosine(37) in tRNA + S-adenosyl-L-methionine = N(1)-methylguanosine(37) in tRNA + S-adenosyl-L-homocysteine + H(+). In terms of biological role, specifically methylates guanosine-37 in various tRNAs. The polypeptide is tRNA (guanine-N(1)-)-methyltransferase (Clostridium botulinum (strain Loch Maree / Type A3)).